The primary structure comprises 490 residues: UDP-N-acetylmuramoylalanine--D-glutamate ligase (490 aa).

124-130 is a binding site for ATP; that stretch reads GTNGKTT.

Belongs to the MurCDEF family.

Its subcellular location is the cytoplasm. It carries out the reaction UDP-N-acetyl-alpha-D-muramoyl-L-alanine + D-glutamate + ATP = UDP-N-acetyl-alpha-D-muramoyl-L-alanyl-D-glutamate + ADP + phosphate + H(+). It functions in the pathway cell wall biogenesis; peptidoglycan biosynthesis. Functionally, cell wall formation. Catalyzes the addition of glutamate to the nucleotide precursor UDP-N-acetylmuramoyl-L-alanine (UMA). This chain is UDP-N-acetylmuramoylalanine--D-glutamate ligase (murD), found in Mycobacterium leprae (strain TN).